The following is a 380-amino-acid chain: Probable protein phosphatase 2C 34 (380 aa).

In terms of domain architecture, PPM-type phosphatase spans 32–335 (AAGEFSMAAA…DDISVIVVYL (304 aa)). Mn(2+) contacts are provided by aspartate 66, glycine 67, aspartate 267, and aspartate 326.

The protein belongs to the PP2C family. It depends on Mg(2+) as a cofactor. Mn(2+) is required as a cofactor.

It catalyses the reaction O-phospho-L-seryl-[protein] + H2O = L-seryl-[protein] + phosphate. It carries out the reaction O-phospho-L-threonyl-[protein] + H2O = L-threonyl-[protein] + phosphate. This Oryza sativa subsp. indica (Rice) protein is Probable protein phosphatase 2C 34 (BIPP2C2).